The following is an 89-amino-acid chain: Cell division protein ZapA (89 aa).

It belongs to the ZapA family. Type 2 subfamily. As to quaternary structure, homodimer. Interacts with FtsZ.

The protein localises to the cytoplasm. Activator of cell division through the inhibition of FtsZ GTPase activity, therefore promoting FtsZ assembly into bundles of protofilaments necessary for the formation of the division Z ring. It is recruited early at mid-cell but it is not essential for cell division. This Bacillus mycoides (strain KBAB4) (Bacillus weihenstephanensis) protein is Cell division protein ZapA.